The sequence spans 169 residues: MSEEYITVGKVVNTQGIQGEVRIIPTTDFPERFVKNDKISVLLRGQRRDYTIERVWEHKQFIIIKFSEIPDMTAAEKLKGGLLQVTMEELVPLPEGNYYIFQIVGLKVVDENEQELGTVAQVLQTGANDVYVVKRSEGKDILIPAIKSVVKEINITEGKMKVELLEGLI.

Residues 95 to 168 (EGNYYIFQIV…KMKVELLEGL (74 aa)) enclose the PRC barrel domain.

This sequence belongs to the RimM family. As to quaternary structure, binds ribosomal protein uS19.

It is found in the cytoplasm. Functionally, an accessory protein needed during the final step in the assembly of 30S ribosomal subunit, possibly for assembly of the head region. Essential for efficient processing of 16S rRNA. May be needed both before and after RbfA during the maturation of 16S rRNA. It has affinity for free ribosomal 30S subunits but not for 70S ribosomes. In Desulforamulus reducens (strain ATCC BAA-1160 / DSM 100696 / MI-1) (Desulfotomaculum reducens), this protein is Ribosome maturation factor RimM.